The following is a 431-amino-acid chain: Glycerol-3-phosphate dehydrogenase [NAD(P)+] (431 aa).

4 residues coordinate NADPH: S79, F80, R100, and K173. Positions 173 and 201 each coordinate sn-glycerol 3-phosphate. A205 is an NADPH binding site. The sn-glycerol 3-phosphate site is built by K256, D309, S319, R320, and N321. K256 functions as the Proton acceptor in the catalytic mechanism. R320 lines the NADPH pocket. E346 is a binding site for NADPH.

This sequence belongs to the NAD-dependent glycerol-3-phosphate dehydrogenase family.

It localises to the cytoplasm. It catalyses the reaction sn-glycerol 3-phosphate + NAD(+) = dihydroxyacetone phosphate + NADH + H(+). It carries out the reaction sn-glycerol 3-phosphate + NADP(+) = dihydroxyacetone phosphate + NADPH + H(+). The protein operates within membrane lipid metabolism; glycerophospholipid metabolism. In terms of biological role, catalyzes the reduction of the glycolytic intermediate dihydroxyacetone phosphate (DHAP) to sn-glycerol 3-phosphate (G3P), the key precursor for phospholipid synthesis. In Psychrobacter cryohalolentis (strain ATCC BAA-1226 / DSM 17306 / VKM B-2378 / K5), this protein is Glycerol-3-phosphate dehydrogenase [NAD(P)+].